Here is a 276-residue protein sequence, read N- to C-terminus: Microtubule-associated protein RP/EB family member 1A (276 aa).

A Calponin-homology (CH) domain is found at Phe-13–Asp-115. The disordered stretch occupies residues Glu-124–Gly-172. The segment covering Val-129–Val-141 has biased composition (basic and acidic residues). Positions Ser-162 to Gly-172 are enriched in low complexity. Residues Pro-173 to Ala-243 form the EB1 C-terminal domain. The segment at Asn-252–Ala-276 is disordered. The segment covering Val-257–Glu-270 has biased composition (acidic residues).

It belongs to the MAPRE family. As to quaternary structure, homodimer and heterodimer with EB1B. Interacts with tobamovirus movement protein. Highly expressed in guard cells of leaf stomata, pollen grains and pollen tubes. Expressed in young roots.

The protein localises to the cytoplasm. The protein resides in the cytoskeleton. Its subcellular location is the spindle pole. It localises to the phragmoplast. Its function is as follows. Binds to the plus end of microtubules and regulates the dynamics of the microtubule cytoskeleton. May be involved in anchoring microtubules to their nucleation sites and/or functioning as a reservoir for distribution to the growing end. In plants, microtubule minus ends are not necessarily severed from the nucleation site and transported to the plus end of a microtubule as part of the recycling process. May play a role in endomembrane organization during polarized growth of plant cells. Interacts with the tobamovirus movement protein (MP) and may play a role in the association of MP with the microtubule system during infection. The sequence is that of Microtubule-associated protein RP/EB family member 1A (EB1A) from Arabidopsis thaliana (Mouse-ear cress).